We begin with the raw amino-acid sequence, 470 residues long: 3-isopropylmalate dehydratase large subunit (470 aa).

Cysteine 348, cysteine 409, and cysteine 412 together coordinate [4Fe-4S] cluster.

Belongs to the aconitase/IPM isomerase family. LeuC type 1 subfamily. In terms of assembly, heterodimer of LeuC and LeuD. It depends on [4Fe-4S] cluster as a cofactor.

It carries out the reaction (2R,3S)-3-isopropylmalate = (2S)-2-isopropylmalate. Its pathway is amino-acid biosynthesis; L-leucine biosynthesis; L-leucine from 3-methyl-2-oxobutanoate: step 2/4. Its function is as follows. Catalyzes the isomerization between 2-isopropylmalate and 3-isopropylmalate, via the formation of 2-isopropylmaleate. This Acidithiobacillus ferrooxidans (strain ATCC 23270 / DSM 14882 / CIP 104768 / NCIMB 8455) (Ferrobacillus ferrooxidans (strain ATCC 23270)) protein is 3-isopropylmalate dehydratase large subunit.